Reading from the N-terminus, the 718-residue chain is Ribonuclease J (718 aa).

A disordered region spans residues 1–130 (MNDSRNRGRK…RGNRGGGRRN (130 aa)). 2 stretches are compositionally biased toward low complexity: residues 55-91 (AAQGAQGSQDSQGSQNAQGSQNRESGNNNRNRSNNNR) and 100-118 (SGNANEGANNNSGNQNRQG). Residues H220, H222, D224, H225, H287, and D309 each contribute to the Zn(2+) site. 510–514 (HTSGH) contributes to the substrate binding site. Zn(2+) is bound at residue H536.

It belongs to the metallo-beta-lactamase superfamily. RNA-metabolizing metallo-beta-lactamase-like family. Bacterial RNase J subfamily. As to quaternary structure, homodimer, may be a subunit of the RNA degradosome. Zn(2+) is required as a cofactor.

Its subcellular location is the cytoplasm. Its function is as follows. An RNase that has 5'-3' exonuclease and possibly endoonuclease activity. Involved in maturation of rRNA and in some organisms also mRNA maturation and/or decay. In Corynebacterium glutamicum (strain ATCC 13032 / DSM 20300 / JCM 1318 / BCRC 11384 / CCUG 27702 / LMG 3730 / NBRC 12168 / NCIMB 10025 / NRRL B-2784 / 534), this protein is Ribonuclease J.